The primary structure comprises 611 residues: Putative type II restriction enzyme HgiDII (611 aa).

Residues 355-364 (YPSNPKKEEV) show a composition bias toward basic and acidic residues. A disordered region spans residues 355-434 (YPSNPKKEEV…PEPSPPPKQE (80 aa)). A compositionally biased stretch (low complexity) spans 381 to 409 (TNASSDSSTATENASSDSSTATENASSET). A run of 2 repeats spans residues 382–392 (NASSDSSTATE) and 393–403 (NASSDSSTATE). The tract at residues 382–403 (NASSDSSTATENASSDSSTATE) is 2.5 X 11 AA tandem repeats. The stretch at 404–409 (NASSET) is one 3; truncated repeat. Residues 410 to 425 (NDGEVEDNSFFDDDIP) are compositionally biased toward acidic residues.

The enzyme catalyses Endonucleolytic cleavage of DNA to give specific double-stranded fragments with terminal 5'-phosphates.. In terms of biological role, according to REBASE this is a P subtype restriction enzyme that recognizes the double-stranded sequence 5'-GTCGAC-3' and cleaves after G-1. No restriction activity was detected upon overexpressing this protein in E.coli. The protein is Putative type II restriction enzyme HgiDII of Herpetosiphon aurantiacus (Herpetosiphon giganteus).